Reading from the N-terminus, the 66-residue chain is Large ribosomal subunit protein uL29 (66 aa).

The protein belongs to the universal ribosomal protein uL29 family.

This is Large ribosomal subunit protein uL29 from Borrelia turicatae (strain 91E135).